The sequence spans 552 residues: Putative E3 ubiquitin-protein ligase ARI6 (552 aa).

The TRIAD supradomain stretch occupies residues 129 to 343 (REFTCGICFE…GGYYACNRYE (215 aa)). Zn(2+) contacts are provided by C133, C136, C150, H152, C155, C158, C178, C183, C222, C227, C245, C247, C252, C255, H260, C265, C292, and C295. Residues 133–183 (CGICFESYPLEETISVSCGHPFCATCWTGYISTSINDGPGCLMLKCPYPCC) form an RING-type 1 zinc finger. The segment at 202–265 (ERYYRYFLRS…SEEAHRPVDC (64 aa)) adopts an IBR-type zinc-finger fold. Residues 292 to 322 (CPKCKRPIEKNHGCMHMTCTPPCKFEFCWLC) form an RING-type 2; atypical zinc finger. C305 is a catalytic residue. The Zn(2+) site is built by C310, C314, C319, C322, H329, and C339. The segment at 518–552 (HAASSKPANCKPSSNTKDGGKGKKEALTMAGSAET) is disordered. Positions 519 to 534 (AASSKPANCKPSSNTK) are enriched in polar residues.

Belongs to the RBR family. Ariadne subfamily. Zn(2+) serves as cofactor.

It carries out the reaction [E2 ubiquitin-conjugating enzyme]-S-ubiquitinyl-L-cysteine + [acceptor protein]-L-lysine = [E2 ubiquitin-conjugating enzyme]-L-cysteine + [acceptor protein]-N(6)-ubiquitinyl-L-lysine.. It participates in protein modification; protein ubiquitination. Might act as an E3 ubiquitin-protein ligase, or as part of E3 complex, which accepts ubiquitin from specific E2 ubiquitin-conjugating enzymes and then transfers it to substrates. In Arabidopsis thaliana (Mouse-ear cress), this protein is Putative E3 ubiquitin-protein ligase ARI6 (ARI6).